A 436-amino-acid chain; its full sequence is MSDRQQVTNARGDRIAIVTGLRTPFAKQATAFHGVSALDMGKMVVNEMLSRSELDPKQIEQLVYGQVVLMPAAPNIAREIVLGTGMDVATDAYSVTRACATSFQSTVNVAESIMTGNIEIGIAGGADSSSVVPIGVSKKLAHALIDLNKARSFGQKLAIIRRLGLKDLLPVPPAVAEFSTGLSMGQTAEQMAKTYNISRADQDALAHRSHSLATETWNAGHLTDEVMAAHVPPYKSFIDRDNNIRENSTIESYAKLRPAFDRKHGTVTAATSTPLTDGASAVLLMSESRAKALGYDPIGYIKSYAFSAIDVWEDMLMGPSYATPLALKRAGMELEDLTLIEMHEAFAAQTLANMQMFGSKKFAAEKLGRNRAIGEIDMSKFNVLGGSLAYGHPFAATGTRLITQVCRELKRRGGGTGLTTACAAGGLGAAMIVEVE.

Catalysis depends on C99, which acts as the Acyl-thioester intermediate. Residues H392 and C422 each act as proton acceptor in the active site.

This sequence belongs to the thiolase-like superfamily. Thiolase family. As to quaternary structure, heterotetramer of two alpha chains (FadJ) and two beta chains (FadI).

It localises to the cytoplasm. The enzyme catalyses an acyl-CoA + acetyl-CoA = a 3-oxoacyl-CoA + CoA. The protein operates within lipid metabolism; fatty acid beta-oxidation. In terms of biological role, catalyzes the final step of fatty acid oxidation in which acetyl-CoA is released and the CoA ester of a fatty acid two carbons shorter is formed. The protein is 3-ketoacyl-CoA thiolase of Shewanella sediminis (strain HAW-EB3).